We begin with the raw amino-acid sequence, 398 residues long: Succinate--CoA ligase [ADP-forming] subunit beta (398 aa).

The region spanning 9–254 is the ATP-grasp domain; the sequence is KRLLHEYGAP…LSEEDPKEIE (246 aa). ATP is bound by residues lysine 46, 53 to 55, glutamate 109, alanine 112, and glutamate 117; that span reads GRG. The Mg(2+) site is built by asparagine 209 and aspartate 223. Residues asparagine 274 and 331–333 contribute to the substrate site; that span reads GIM.

The protein belongs to the succinate/malate CoA ligase beta subunit family. Heterotetramer of two alpha and two beta subunits. Mg(2+) serves as cofactor.

It carries out the reaction succinate + ATP + CoA = succinyl-CoA + ADP + phosphate. The catalysed reaction is GTP + succinate + CoA = succinyl-CoA + GDP + phosphate. The protein operates within carbohydrate metabolism; tricarboxylic acid cycle; succinate from succinyl-CoA (ligase route): step 1/1. Succinyl-CoA synthetase functions in the citric acid cycle (TCA), coupling the hydrolysis of succinyl-CoA to the synthesis of either ATP or GTP and thus represents the only step of substrate-level phosphorylation in the TCA. The beta subunit provides nucleotide specificity of the enzyme and binds the substrate succinate, while the binding sites for coenzyme A and phosphate are found in the alpha subunit. The chain is Succinate--CoA ligase [ADP-forming] subunit beta from Bartonella quintana (strain Toulouse) (Rochalimaea quintana).